The chain runs to 188 residues: Elongation factor P (188 aa).

It belongs to the elongation factor P family.

It localises to the cytoplasm. The protein operates within protein biosynthesis; polypeptide chain elongation. In terms of biological role, involved in peptide bond synthesis. Stimulates efficient translation and peptide-bond synthesis on native or reconstituted 70S ribosomes in vitro. Probably functions indirectly by altering the affinity of the ribosome for aminoacyl-tRNA, thus increasing their reactivity as acceptors for peptidyl transferase. This Anaplasma marginale (strain Florida) protein is Elongation factor P.